The following is a 117-amino-acid chain: Large ribosomal subunit protein bL20 (117 aa).

This sequence belongs to the bacterial ribosomal protein bL20 family.

In terms of biological role, binds directly to 23S ribosomal RNA and is necessary for the in vitro assembly process of the 50S ribosomal subunit. It is not involved in the protein synthesizing functions of that subunit. The protein is Large ribosomal subunit protein bL20 of Wigglesworthia glossinidia brevipalpis.